We begin with the raw amino-acid sequence, 573 residues long: Vacuolar protein 8 (573 aa).

The segment at 1-36 (MAASAADRMGRQRMSGLSCSAPPRPTVVTNPGNKQD) is disordered. A compositionally biased stretch (polar residues) spans 27-36 (VVTNPGNKQD). ARM repeat units follow at residues 60–97 (NRGEVDFFSNGPLRALSTLVYSDNIDLQRSAALAFAEI), 98–137 (TEKDIRPVNRDCLEPVLLLLQNTDPDIQRAASAALGNLAV), 139–178 (NENKVLIVEMGGFEPLIRQMMSPNVEVQCNAVGCITNLAT), 180–219 (EANKSKIARSGALLPLTKLAKSKDMRVQRNATGALLNMTH), 221–260 (DQNRQELVNAGAIPILVSLLSSRDPDVQYYSTTALSNIAV), 264–303 (NRKKLSSSEPRLVEHLIKLMDSGSPRVQCQAALALRNLAS), 305–344 (SDYQLEIVKANGLPHLFNLFQSTHTPLVLAAVACIRNISI), 346–386 (PLNE…NLAA), and 430–469 (DELKGTLLELGIAEVLIPLTLSDNIEVQGNSAAALGNLSS).

This sequence belongs to the beta-catenin family.

Its subcellular location is the vacuole membrane. In terms of biological role, functions in both vacuole inheritance and protein targeting from the cytoplasm to vacuole. In Yarrowia lipolytica (strain CLIB 122 / E 150) (Yeast), this protein is Vacuolar protein 8 (VAC8).